Here is a 606-residue protein sequence, read N- to C-terminus: Elongation factor 4 (606 aa).

One can recognise a tr-type G domain in the interval 10–192 (KNIRNFSIIA…ALVARVPPPQ (183 aa)). Residues 22 to 27 (DHGKST) and 139 to 142 (NKID) contribute to the GTP site.

Belongs to the TRAFAC class translation factor GTPase superfamily. Classic translation factor GTPase family. LepA subfamily.

The protein resides in the cell inner membrane. It carries out the reaction GTP + H2O = GDP + phosphate + H(+). Functionally, required for accurate and efficient protein synthesis under certain stress conditions. May act as a fidelity factor of the translation reaction, by catalyzing a one-codon backward translocation of tRNAs on improperly translocated ribosomes. Back-translocation proceeds from a post-translocation (POST) complex to a pre-translocation (PRE) complex, thus giving elongation factor G a second chance to translocate the tRNAs correctly. Binds to ribosomes in a GTP-dependent manner. This chain is Elongation factor 4, found in Nitrosococcus oceani (strain ATCC 19707 / BCRC 17464 / JCM 30415 / NCIMB 11848 / C-107).